A 217-amino-acid polypeptide reads, in one-letter code: Peroxiredoxin Q, chloroplastic (217 aa).

A chloroplast-targeting transit peptide spans 1–66 (MAFAASTACC…RRRAASTGIV (66 aa)). Positions 70 to 217 (VSKGSVPPNF…GETLKIIQNL (148 aa)) constitute a Thioredoxin domain. The active-site Cysteine sulfenic acid (-SOH) intermediate is the C112. A disulfide bond links C112 and C117.

It belongs to the peroxiredoxin family. BCP/PrxQ subfamily. As to quaternary structure, monomer.

The protein localises to the plastid. It localises to the chloroplast thylakoid lumen. The enzyme catalyses a hydroperoxide + [thioredoxin]-dithiol = an alcohol + [thioredoxin]-disulfide + H2O. In terms of biological role, thiol-specific peroxidase that catalyzes the reduction of hydrogen peroxide and organic hydroperoxides to water and alcohols, respectively. Plays a role in cell protection against oxidative stress by detoxifying peroxides. The sequence is that of Peroxiredoxin Q, chloroplastic (PRX1) from Triticum aestivum (Wheat).